The primary structure comprises 840 residues: Leucine--tRNA ligase (840 aa).

The 'HIGH' region signature appears at 44-55; it reads PYPSANGLHVGH. The 'KMSKS' region signature appears at 617–621; that stretch reads KMSKS. K620 is an ATP binding site.

This sequence belongs to the class-I aminoacyl-tRNA synthetase family.

It is found in the cytoplasm. It carries out the reaction tRNA(Leu) + L-leucine + ATP = L-leucyl-tRNA(Leu) + AMP + diphosphate. This is Leucine--tRNA ligase from Borreliella afzelii (strain PKo) (Borrelia afzelii).